A 361-amino-acid chain; its full sequence is Septin-2 (361 aa).

At Y17 the chain carries Phosphotyrosine. Positions 34–306 constitute a Septin-type G domain; sequence KGFEFTLMVV…ENFRSERLKR (273 aa). The tract at residues 44-51 is G1 motif; it reads GESGLGKS. GTP is bound by residues 44–52, T78, G104, and 183–186; these read GESGLGKST and KADT. A G3 motif region spans residues 101 to 104; sequence DTPG. The G4 motif stretch occupies residues 182–185; sequence AKAD. Residue K190 is modified to N6-acetyllysine. A Phosphotyrosine modification is found at Y211. S218 is subject to Phosphoserine. Residues G241, R256, and Y258 each coordinate GTP. The important for dimerization stretch occupies residues 260-270; it reads WGVVEVENPEH.

It belongs to the TRAFAC class TrmE-Era-EngA-EngB-Septin-like GTPase superfamily. Septin GTPase family. In terms of assembly, septins polymerize into heterooligomeric protein complexes that form filaments, and associate with cellular membranes, actin filaments and microtubules. GTPase activity is required for filament formation. Septin filaments are assembled from asymmetrical heterotrimers, composed of SEPTIN2, SEPTIN6 and SEPTIN7 that associate head-to-head to form a hexameric unit. Interaction between SEPTIN2 and SEPTIN7 seems indirect. Also interacts with SEPTIN9 and SEPTIN5. Interaction with SEPTIN4 not detected. Component of a septin core octameric complex consisting of SEPTIN12, SEPTIN7, SEPTIN6 and SEPTIN2 or SEPTIN4 in the order 12-7-6-2-2-6-7-12 or 12-7-6-4-4-6-7-12 and located in the sperm annulus. Interacts with MAP4. Interacts with DZIP1L. In terms of tissue distribution, widely expressed.

The protein resides in the cytoplasm. It localises to the cytoskeleton. It is found in the spindle. Its subcellular location is the chromosome. The protein localises to the centromere. The protein resides in the kinetochore. It localises to the cleavage furrow. It is found in the midbody. Its subcellular location is the cell cortex. The protein localises to the cell projection. The protein resides in the cilium membrane. It localises to the cilium. It is found in the flagellum. Its function is as follows. Filament-forming cytoskeletal GTPase. Forms a filamentous structure with SEPTIN12, SEPTIN6, SEPTIN2 and probably SEPTIN4 at the sperm annulus which is required for the structural integrity and motility of the sperm tail during postmeiotic differentiation. Required for normal organization of the actin cytoskeleton. Plays a role in the biogenesis of polarized columnar-shaped epithelium by maintaining polyglutamylated microtubules, thus facilitating efficient vesicle transport, and by impeding MAP4 binding to tubulin. Required for the progression through mitosis. Forms a scaffold at the midplane of the mitotic splindle required to maintain CENPE localization at kinetochores and consequently chromosome congression. During anaphase, may be required for chromosome segregation and spindle elongation. Plays a role in ciliogenesis and collective cell movements. In cilia, required for the integrity of the diffusion barrier at the base of the primary cilium that prevents diffusion of transmembrane proteins between the cilia and plasma membranes: probably acts by regulating the assembly of the tectonic-like complex (also named B9 complex) by localizing TMEM231 protein. The chain is Septin-2 from Mus musculus (Mouse).